Consider the following 148-residue polypeptide: NADPH-dependent 7-cyano-7-deazaguanine reductase (148 aa).

The Thioimide intermediate role is filled by C50. D57 acts as the Proton donor in catalysis. Residues 72–74 (VES) and 91–92 (HE) each bind substrate.

This sequence belongs to the GTP cyclohydrolase I family. QueF type 1 subfamily.

The protein resides in the cytoplasm. The enzyme catalyses 7-aminomethyl-7-carbaguanine + 2 NADP(+) = 7-cyano-7-deazaguanine + 2 NADPH + 3 H(+). It functions in the pathway tRNA modification; tRNA-queuosine biosynthesis. Its function is as follows. Catalyzes the NADPH-dependent reduction of 7-cyano-7-deazaguanine (preQ0) to 7-aminomethyl-7-deazaguanine (preQ1). The chain is NADPH-dependent 7-cyano-7-deazaguanine reductase from Helicobacter pylori (strain J99 / ATCC 700824) (Campylobacter pylori J99).